Consider the following 175-residue polypeptide: MGIISYLATASEGGFHLNFDILETNIINLAIIIGVLYVYGSKFIGNILETRKSKIVADLEDAENRAKKAQEALTKAQKDLEQAQAQAAKIREDAKVAAEKTKQDILAKGRDEVEKLKASAVKELSTEQAKVITELKRRVAELALAKVEAQLRSDLDESAQAKLVDRSIAQLGGGA.

Residues 26 to 48 (IINLAIIIGVLYVYGSKFIGNIL) traverse the membrane as a helical segment.

Belongs to the ATPase B chain family. In terms of assembly, F-type ATPases have 2 components, F(1) - the catalytic core - and F(0) - the membrane proton channel. F(1) has five subunits: alpha(3), beta(3), gamma(1), delta(1), epsilon(1). F(0) has four main subunits: a(1), b(1), b'(1) and c(10-14). The alpha and beta chains form an alternating ring which encloses part of the gamma chain. F(1) is attached to F(0) by a central stalk formed by the gamma and epsilon chains, while a peripheral stalk is formed by the delta, b and b' chains.

It localises to the cellular thylakoid membrane. In terms of biological role, f(1)F(0) ATP synthase produces ATP from ADP in the presence of a proton or sodium gradient. F-type ATPases consist of two structural domains, F(1) containing the extramembraneous catalytic core and F(0) containing the membrane proton channel, linked together by a central stalk and a peripheral stalk. During catalysis, ATP synthesis in the catalytic domain of F(1) is coupled via a rotary mechanism of the central stalk subunits to proton translocation. Its function is as follows. Component of the F(0) channel, it forms part of the peripheral stalk, linking F(1) to F(0). The chain is ATP synthase subunit b 1 from Picosynechococcus sp. (strain ATCC 27264 / PCC 7002 / PR-6) (Agmenellum quadruplicatum).